The chain runs to 169 residues: Cell cycle link protein (169 aa).

The tract at residues 9–22 (LPLELREKIVRDHL) is binding to host SKP1 protein. The short motif at 110–114 (LSCGE) is the LXCXE motif, interaction with host RBR element.

Belongs to the nanovirus Clink protein family. In terms of assembly, interacts with host SKP1. Interacts (via LXCXE domain) with host retinoblastoma-related protein 1 (RBR1). Interacts (via LXCXE domain) with retinoblastoma-related proteins (RBR).

Its function is as follows. Interacts with and disrupts the function of host retinoblastoma-related proteins RBR, which are key regulators of the cell cycle. Induces transcriptional activation of E2F-regulated S-phase and G2/M-phase-specific genes. Inactivation of the ability of RBR to arrest the cell cycle leads to the stimulation of viral DNA replication. This chain is Cell cycle link protein (DNA-C), found in Astragalus sinicus (Chinese milk vetch).